Reading from the N-terminus, the 605-residue chain is Phosphoenolpyruvate carboxykinase [GTP] (605 aa).

Residues Arg-79 and Tyr-218–Gly-220 each bind substrate. The Mn(2+) site is built by Lys-227 and His-247. Residue Ser-269 participates in substrate binding. Ala-270–Asn-275 provides a ligand contact to GTP. Cys-271 is a catalytic residue. Asp-294 serves as a coordination point for Mn(2+). The segment covering Leu-364–Ala-381 has biased composition (basic and acidic residues). A disordered region spans residues Leu-364 to Ser-385. Asn-384–Arg-386 contacts substrate. GTP-binding positions include Arg-386, Arg-417, and Phe-513–Asn-516.

This sequence belongs to the phosphoenolpyruvate carboxykinase [GTP] family. In terms of assembly, monomer. The cofactor is Mn(2+).

Its subcellular location is the cytoplasm. It catalyses the reaction oxaloacetate + GTP = phosphoenolpyruvate + GDP + CO2. The protein operates within carbohydrate biosynthesis; gluconeogenesis. Functionally, catalyzes the conversion of oxaloacetate (OAA) to phosphoenolpyruvate (PEP), the rate-limiting step in the metabolic pathway that produces glucose from lactate and other precursors derived from the citric acid cycle. The polypeptide is Phosphoenolpyruvate carboxykinase [GTP] (Saccharopolyspora erythraea (strain ATCC 11635 / DSM 40517 / JCM 4748 / NBRC 13426 / NCIMB 8594 / NRRL 2338)).